Reading from the N-terminus, the 753-residue chain is Photosystem I P700 chlorophyll a apoprotein A1 (753 aa).

Transmembrane regions (helical) follow at residues 73 to 96 (IFSAHFGQLAIIFIWLSGMYYHGA), 159 to 182 (LYCTAIGALIFAALMLFAGWFHYH), 198 to 222 (LNHHLAGLLGLGSLSWAGHQIHVSL), 294 to 312 (TAHHHLAIAVLFLIAGHMY), 349 to 372 (WHAQLAVNLAMLGSLTIVVAHHMY), 388 to 414 (LSLFTHHMWIGGFIIVGAAAHAAIFMV), 436 to 458 (AIVSHLNWVCIFLGFHSFGLYIH), and 534 to 552 (FLVHHIHAFTIHVTVLILL). C576 and C585 together coordinate [4Fe-4S] cluster. The next 2 helical transmembrane spans lie at 592-613 (HVFLGLFWMYNAISVVIFHFSW) and 667-689 (LSAYGLLFLGAHFVWAFSLMFLF). H678 serves as a coordination point for chlorophyll a'. Chlorophyll a-binding residues include M686 and Y694. Position 695 (W695) interacts with phylloquinone. A helical membrane pass occupies residues 727-747 (AVGVAHYLLGGIVTTWAFFLA).

This sequence belongs to the PsaA/PsaB family. In terms of assembly, the PsaA/B heterodimer binds the P700 chlorophyll special pair and subsequent electron acceptors. PSI consists of a core antenna complex that captures photons, and an electron transfer chain that converts photonic excitation into a charge separation. The eukaryotic PSI reaction center is composed of at least 11 subunits. It depends on P700 is a chlorophyll a/chlorophyll a' dimer, A0 is one or more chlorophyll a, A1 is one or both phylloquinones and FX is a shared 4Fe-4S iron-sulfur center. as a cofactor.

It is found in the plastid. Its subcellular location is the chloroplast thylakoid membrane. The enzyme catalyses reduced [plastocyanin] + hnu + oxidized [2Fe-2S]-[ferredoxin] = oxidized [plastocyanin] + reduced [2Fe-2S]-[ferredoxin]. Its function is as follows. PsaA and PsaB bind P700, the primary electron donor of photosystem I (PSI), as well as the electron acceptors A0, A1 and FX. PSI is a plastocyanin-ferredoxin oxidoreductase, converting photonic excitation into a charge separation, which transfers an electron from the donor P700 chlorophyll pair to the spectroscopically characterized acceptors A0, A1, FX, FA and FB in turn. Oxidized P700 is reduced on the lumenal side of the thylakoid membrane by plastocyanin. This Pinus thunbergii (Japanese black pine) protein is Photosystem I P700 chlorophyll a apoprotein A1.